We begin with the raw amino-acid sequence, 120 residues long: Small ribosomal subunit protein uS12c (120 aa).

It belongs to the universal ribosomal protein uS12 family. As to quaternary structure, part of the 30S ribosomal subunit.

The protein resides in the plastid. It localises to the apicoplast. In terms of biological role, with S4 and S5 plays an important role in translational accuracy. Located at the interface of the 30S and 50S subunits. This is Small ribosomal subunit protein uS12c (rps12) from Eimeria tenella (Coccidian parasite).